Consider the following 282-residue polypeptide: Eukaryotic translation initiation factor 3 subunit G (282 aa).

The tract at residues 1 to 27 (MSSSKSLDWADDEDYGTGLPSIQTFDN) is disordered. Phosphoserine is present on residues Ser-160 and Ser-164. Positions 202-280 (ATLRVTNLSD…LILRCEFSKP (79 aa)) constitute an RRM domain.

It belongs to the eIF-3 subunit G family. Component of the eukaryotic translation initiation factor 3 (eIF-3) complex. The eIF-3 complex appears to include tif32/eif3a, SPAC25G10.08/eif3b, tif33/eif3c, SPBC4C3.07/eif3f, tif35/eif3g and sum1/eif3i. This set of common subunits may also associate exclusively with either moe1/eif3d and int6/eif3e, or with SPAC821.05/eif3h and SPAC1751.03/eif3m. The eIF-3 complex may also include SPAC3A12.13c/eif3j.

It is found in the cytoplasm. Its function is as follows. RNA-binding component of the eukaryotic translation initiation factor 3 (eIF-3) complex, which is involved in protein synthesis of a specialized repertoire of mRNAs and, together with other initiation factors, stimulates binding of mRNA and methionyl-tRNAi to the 40S ribosome. The eIF-3 complex specifically targets and initiates translation of a subset of mRNAs involved in cell proliferation. This subunit can bind 18S rRNA. This is Eukaryotic translation initiation factor 3 subunit G (tif35) from Schizosaccharomyces pombe (strain 972 / ATCC 24843) (Fission yeast).